A 79-amino-acid polypeptide reads, in one-letter code: D-alanyl carrier protein (79 aa).

A Carrier domain is found at 1–77; sequence MDIKSEVIEI…KIIAGIVELQ (77 aa). Ser35 carries the post-translational modification O-(pantetheine 4'-phosphoryl)serine.

The protein belongs to the DltC family. In terms of processing, 4'-phosphopantetheine is transferred from CoA to a specific serine of apo-DCP.

It is found in the cytoplasm. It participates in cell wall biogenesis; lipoteichoic acid biosynthesis. In terms of biological role, carrier protein involved in the D-alanylation of lipoteichoic acid (LTA). The loading of thioester-linked D-alanine onto DltC is catalyzed by D-alanine--D-alanyl carrier protein ligase DltA. The DltC-carried D-alanyl group is further transferred to cell membrane phosphatidylglycerol (PG) by forming an ester bond, probably catalyzed by DltD. D-alanylation of LTA plays an important role in modulating the properties of the cell wall in Gram-positive bacteria, influencing the net charge of the cell wall. This Streptococcus pneumoniae serotype 2 (strain D39 / NCTC 7466) protein is D-alanyl carrier protein.